Reading from the N-terminus, the 125-residue chain is Small ribosomal subunit protein uS13 (125 aa).

The protein belongs to the universal ribosomal protein uS13 family. As to quaternary structure, part of the 30S ribosomal subunit. Forms a loose heterodimer with protein S19. Forms two bridges to the 50S subunit in the 70S ribosome.

In terms of biological role, located at the top of the head of the 30S subunit, it contacts several helices of the 16S rRNA. In the 70S ribosome it contacts the 23S rRNA (bridge B1a) and protein L5 of the 50S subunit (bridge B1b), connecting the 2 subunits; these bridges are implicated in subunit movement. Contacts the tRNAs in the A and P-sites. In Orientia tsutsugamushi (strain Ikeda) (Rickettsia tsutsugamushi), this protein is Small ribosomal subunit protein uS13.